The following is a 429-amino-acid chain: Ribonuclease E/G-like protein (429 aa).

2 residues coordinate Mg(2+): Asp290 and Asp332.

Belongs to the RNase E/G family. Mg(2+) is required as a cofactor.

Its subcellular location is the plastid. It localises to the chloroplast stroma. Its function is as follows. Involved in intercistronic processing of primary transcripts from chloroplast operons. The endonucleolytic activity of the enzyme depends on the number of phosphates at the 5' end, is inhibited by structured RNA, and preferentially cleaves A/U-rich sequences. This is Ribonuclease E/G-like protein (rne) from Guillardia theta (Cryptophyte).